The sequence spans 258 residues: Phycoerythrobilin:ferredoxin oxidoreductase (258 aa).

The protein belongs to the HY2 family.

The catalysed reaction is (3Z)-phycoerythrobilin + oxidized 2[4Fe-4S]-[ferredoxin] = 15,16-dihydrobiliverdin + reduced 2[4Fe-4S]-[ferredoxin] + 2 H(+). Catalyzes the two-electron reduction of the C2 and C3(1) diene system of 15,16-dihydrobiliverdin. This is Phycoerythrobilin:ferredoxin oxidoreductase from Prochlorococcus marinus (strain NATL1A).